The sequence spans 667 residues: E3 ubiquitin-protein ligase RNF6 (667 aa).

Disordered regions lie at residues 1-25 (MDPS…RRWQ), 75-100 (KEQL…RAHS), 116-216 (GNVT…QGSF), 295-355 (FSSR…TPLS), 396-419 (ETRD…STVE), 507-532 (GDAA…GAEM), and 537-556 (EPAP…QLGR). A compositionally biased stretch (low complexity) spans 79 to 90 (ASQPGSDSAASD). Polar residues predominate over residues 116-139 (GNVTRSGQNGNQSWRAVSRTNPNS). The span at 150-163 (INPDNRGSEMHGED) shows a compositional bias: basic and acidic residues. Positions 191–200 (SQTSMSSSGP) are enriched in low complexity. Polar residues predominate over residues 296-327 (SSRSRSPIQRQNGTVHHNSQRQGRPVQQTGRN). Positions 516–530 (HGRASSQASQAQDGA) are enriched in low complexity. Ser-559 carries the post-translational modification Phosphoserine. The RING-type; atypical zinc finger occupies 614 to 655 (CSVCISDYVAGNKLRQLPCLHEFHIHCIDRWLSENCTCPVCR).

It belongs to the RNF12 family. In terms of tissue distribution, widely expressed with higher expression in the testis in both germ cells and Sertoli cells.

It is found in the nucleus. Its subcellular location is the cytoplasm. The protein resides in the cell projection. The protein localises to the axon. It localises to the PML body. The enzyme catalyses S-ubiquitinyl-[E2 ubiquitin-conjugating enzyme]-L-cysteine + [acceptor protein]-L-lysine = [E2 ubiquitin-conjugating enzyme]-L-cysteine + N(6)-ubiquitinyl-[acceptor protein]-L-lysine.. It participates in protein modification; protein ubiquitination. In terms of biological role, E3 ubiquitin-protein ligase mediating 'Lys-48'-linked polyubiquitination of LIMK1 and its subsequent targeting to the proteasome for degradation. Negatively regulates axonal outgrowth through regulation of the LIMK1 turnover. Mediates 'Lys-6' and 'Lys-27'-linked polyubiquitination of AR/androgen receptor thereby modulating its transcriptional activity. May also bind DNA and function as a transcriptional regulator. Mediates polyubiquitination of QKI in macrophages, leading to its degradation. This chain is E3 ubiquitin-protein ligase RNF6, found in Mus musculus (Mouse).